The following is a 371-amino-acid chain: Enoyl-[acyl-carrier-protein] reductase [NADH] 2, chloroplastic (371 aa).

Residues 1–67 constitute a chloroplast transit peptide; that stretch reads MGASVTTGLQ…SLNHKRFAVR (67 aa). Residues G87, Y94, 151–152, 198–199, and L248 contribute to the NAD(+) site; these read DA and SL. Active-site proton acceptor residues include Y250 and Y260. NAD(+) contacts are provided by residues K268 and 298–302; that span reads LGSRA.

It belongs to the short-chain dehydrogenases/reductases (SDR) family. FabI subfamily. In terms of assembly, homotetramer.

The protein localises to the plastid. It localises to the chloroplast. The enzyme catalyses a 2,3-saturated acyl-[ACP] + NAD(+) = a (2E)-enoyl-[ACP] + NADH + H(+). Its pathway is lipid metabolism; fatty acid biosynthesis. Catalyzes the NAD-dependent reduction of a carbon-carbon double bond in an enoyl moiety that is covalently linked to an acyl carrier protein (ACP). Catalyzes the last reduction step in the de novo synthesis cycle of fatty acids. Involved in the elongation cycle of fatty acids which are used in lipid metabolism. Required for normal plant growth. This chain is Enoyl-[acyl-carrier-protein] reductase [NADH] 2, chloroplastic, found in Oryza sativa subsp. japonica (Rice).